The following is a 692-amino-acid chain: 5-taurinomethyluridine-[tRNA] synthase subunit MTO1, mitochondrial (692 aa).

Residues 1–25 constitute a mitochondrion transit peptide; that stretch reads MFYLRGCGRWVAASFTKQQFPLVRL. FAD contacts are provided by residues 43-48, Val-155, Ser-218, and Gln-407; that span reads GGGHAG. Lys-508 is modified (N6-methyllysine). The tract at residues 669-692 is disordered; sequence AAMNESPKTDQCLRNADRLQERQL. Over residues 683-692 the composition is skewed to basic and acidic residues; the sequence is NADRLQERQL.

Belongs to the MnmG family. Homodimer; forms a dimer in the presence of potassium. Interacts with GTPBP3; forms the GTPBP3-MTO1 complex composed of homodimers of GTPBP3 and MTO1. Requires FAD as cofactor.

The protein resides in the mitochondrion. The catalysed reaction is 5,10-methylenetetrahydrofolate + uridine(34) in tRNA + taurine + GTP + A + H2O = 5-taurinomethyluridine(34) in tRNA + 7,8-dihydrofolate + GDP + AH2 + phosphate + H(+). In terms of biological role, component of the GTPBP3-MTO1 complex that catalyzes the 5-taurinomethyluridine (taum(5)U) modification at the 34th wobble position (U34) of mitochondrial tRNAs (mt-tRNAs), which plays a role in mt-tRNA decoding and mitochondrial translation. Taum(5)U formation on mammalian mt-tRNA requires the presence of both GTPBP3-mediated GTPase activity and MTO1 catalytic activity. This chain is 5-taurinomethyluridine-[tRNA] synthase subunit MTO1, mitochondrial (MTO1), found in Macaca fascicularis (Crab-eating macaque).